The sequence spans 209 residues: MCAKKRSASSNRWLQESLKDKYVVQAQKKGLRSRAWFKLDQIQKSDRLFQPYMTIIDLGAAPGSWSQYVTTQIGKNGHVIACDLRYMSPLSGVDFIQGDFCNKQVLQAILQRLENKKAQVILSDMSPNFSGKPEIDIPKSMYLVEKALKMCRYLLIPGGTFIVKVFQGDGFYEYICSMHALFNTVKIIKPDASRSRSREVYLIAKGHKI.

S-adenosyl-L-methionine contacts are provided by glycine 63, tryptophan 65, aspartate 83, aspartate 99, and aspartate 124. Residue lysine 164 is the Proton acceptor of the active site.

This sequence belongs to the class I-like SAM-binding methyltransferase superfamily. RNA methyltransferase RlmE family.

It is found in the cytoplasm. The catalysed reaction is uridine(2552) in 23S rRNA + S-adenosyl-L-methionine = 2'-O-methyluridine(2552) in 23S rRNA + S-adenosyl-L-homocysteine + H(+). Its function is as follows. Specifically methylates the uridine in position 2552 of 23S rRNA at the 2'-O position of the ribose in the fully assembled 50S ribosomal subunit. The sequence is that of Ribosomal RNA large subunit methyltransferase E from Baumannia cicadellinicola subsp. Homalodisca coagulata.